A 154-amino-acid chain; its full sequence is UPF0547 protein C16orf87 homolog (154 aa).

Positions 46-119 are disordered; it reads HPEKAPSSTE…KHEEEREKQE (74 aa). A compositionally biased stretch (basic and acidic residues) spans 68 to 84; the sequence is VRREKINSTVNKDLENR. Serine 91 carries the phosphoserine modification. Residues 104-132 adopt a coiled-coil conformation; it reads KSASAKKHEEEREKQEKEIDIYANLSDEK. A compositionally biased stretch (basic and acidic residues) spans 109-119; sequence KKHEEEREKQE.

This sequence belongs to the UPF0547 family.

This chain is UPF0547 protein C16orf87 homolog, found in Bos taurus (Bovine).